We begin with the raw amino-acid sequence, 292 residues long: NAD kinase (292 aa).

Residue Asp-73 is the Proton acceptor of the active site. NAD(+) contacts are provided by residues 73–74 (DG), 147–148 (NE), His-158, Arg-175, Asp-177, 188–193 (TAYSLS), and Gln-247.

Belongs to the NAD kinase family. A divalent metal cation serves as cofactor.

Its subcellular location is the cytoplasm. It carries out the reaction NAD(+) + ATP = ADP + NADP(+) + H(+). Its function is as follows. Involved in the regulation of the intracellular balance of NAD and NADP, and is a key enzyme in the biosynthesis of NADP. Catalyzes specifically the phosphorylation on 2'-hydroxyl of the adenosine moiety of NAD to yield NADP. This is NAD kinase from Shigella boydii serotype 4 (strain Sb227).